The chain runs to 912 residues: MINSLLTRVFGSRNERQLRQLNRLVTQINALEPTIEKLSDAELQAKTPEFKQRLAAGESLDKILPEAFAVCREASRRVLGMRHYDVQLIGGMVLHLGKIAEMRTGEGKTLVATLPVYLNALQGEGVHVVTVNDYLARRDAAQMGKLYNWLGLSVGVVYPGMPHSDKREAYGADITYGTNNEFGFDYLRDNMALSRADRYQRNLHYAIVDEVDSILIDEARTPLIISGPADESPELYIRVNRIVPQLTRQESEEGEGDFWIDEKGKQVHLSEAGMGHAEELLLQAGILENAEDGLYAAQNLSVVHHLNAALRAHAIYQRDVDYIVRDGEVVIVDEFTGRTLSGRRWSDGLHQAVEAKEGVPVQRENQTLASITFQNLFRMYKKLSGMTGTADTEAYEFQSIYGLEVVVIPTNRPTVRKDHPDQVFLNRKGKFNAVLADIEDCAKRGQPVLVGTTSIETSEMLSEHLRKAGVKHEVLNAKQHEREATIVANAGQPGAVTIATNMAGRGTDIVLGGSLESEYHALGEDASEDARFKIKTEWQRRHDAVKAAGGLHIIGTERHESRRIDNQLRGRAGRQGDPGSSRFYLSLEDNLMRIFASDWVQKAMRMMGMKEDDVIEDRLVSRQIEKAQRKVEAHNFDIRKNLLDFDDVNNDQRKVIYAQRDELLDAESVKDNVDGIRGDVIYDLVARFVPPNSVDEQWDLKGLEATLESELGMTLSLTDMVRAQEEIDAEQIAAKVQTAVDAHFAEKEAAIGADTMRALEKHVMLTVLDQGWKEHLAKMDYLRQGIYLRGYAQKQPKQEYKKEAFELFSEMLENVKREVINLLARVRIRSEEEVAELEEQERLQAQARLMASQFQHQDVGGYGAEEEVEQMQGGNAPVPVSQVTRDEPKVGRNDPCPCGSGKKYKHCHGQLS.

ATP-binding positions include glutamine 87, 105 to 109, and aspartate 508; that span reads GEGKT. Positions 864 to 912 are disordered; the sequence is AEEEVEQMQGGNAPVPVSQVTRDEPKVGRNDPCPCGSGKKYKHCHGQLS. The Zn(2+) site is built by cysteine 896, cysteine 898, cysteine 907, and histidine 908. Positions 902–912 are enriched in basic residues; sequence KKYKHCHGQLS.

This sequence belongs to the SecA family. In terms of assembly, monomer and homodimer. Part of the essential Sec protein translocation apparatus which comprises SecA, SecYEG and auxiliary proteins SecDF-YajC and YidC. Zn(2+) serves as cofactor.

It is found in the cell inner membrane. Its subcellular location is the cytoplasm. It carries out the reaction ATP + H2O + cellular proteinSide 1 = ADP + phosphate + cellular proteinSide 2.. Part of the Sec protein translocase complex. Interacts with the SecYEG preprotein conducting channel. Has a central role in coupling the hydrolysis of ATP to the transfer of proteins into and across the cell membrane, serving both as a receptor for the preprotein-SecB complex and as an ATP-driven molecular motor driving the stepwise translocation of polypeptide chains across the membrane. The polypeptide is Protein translocase subunit SecA (Xanthomonas euvesicatoria pv. vesicatoria (strain 85-10) (Xanthomonas campestris pv. vesicatoria)).